The chain runs to 406 residues: Cysteine desulfurase (406 aa).

Lysine 226 bears the N6-(pyridoxal phosphate)lysine mark. The active-site Cysteine persulfide intermediate is the cysteine 364.

This sequence belongs to the class-V pyridoxal-phosphate-dependent aminotransferase family. Csd subfamily. In terms of assembly, homodimer. Interacts with SufE and the SufBCD complex composed of SufB, SufC and SufD. The interaction with SufE is required to mediate the direct transfer of the sulfur atom from the S-sulfanylcysteine. It depends on pyridoxal 5'-phosphate as a cofactor.

It localises to the cytoplasm. The enzyme catalyses (sulfur carrier)-H + L-cysteine = (sulfur carrier)-SH + L-alanine. The catalysed reaction is L-selenocysteine + AH2 = hydrogenselenide + L-alanine + A + H(+). The protein operates within cofactor biosynthesis; iron-sulfur cluster biosynthesis. In terms of biological role, cysteine desulfurases mobilize the sulfur from L-cysteine to yield L-alanine, an essential step in sulfur metabolism for biosynthesis of a variety of sulfur-containing biomolecules. Component of the suf operon, which is activated and required under specific conditions such as oxidative stress and iron limitation. Acts as a potent selenocysteine lyase in vitro, that mobilizes selenium from L-selenocysteine. Selenocysteine lyase activity is however unsure in vivo. The chain is Cysteine desulfurase from Escherichia coli O8 (strain IAI1).